A 424-amino-acid polypeptide reads, in one-letter code: MQAATSCDLKFRSTDPTSRNKCFSHAIPKRVAVTCGYRSESFSFPNGVSVSRSDWQSSCAILSSKVASVENTGGLADKIAAVNGHTNGSVNLGLVAVESTNGKLAPAQPLTITDLSPAPLHGSSLRVAYQGVPGAYSEAAAGKAYPNCDAIPCDQFDVAFQAVELWIADRAVLPVENSLGGSIHRNYDLLLRHRLHIVGEVQIPVHHCLLALPGVRTDCVSRVISHPQALAQTEHSLDVLTPHAAREAFHDTAAAAEYISANDLHDTAAVASARAAELYNLQILADGIQDDPGNVTRFLMLAREPIIPRTDRPFKTSIVFAAQEHKGTSVLFKVLSAFAFRDISLTKIESRPHHNRPLRVVGDGSFGTSKNFEYMFYVDFEASMAEPRAQNALAEVQEYTSFLRVLGSYPMDMTPWSMTSTEEA.

Residues 1 to 34 constitute a chloroplast transit peptide; sequence MQAATSCDLKFRSTDPTSRNKCFSHAIPKRVAVT. In terms of domain architecture, Prephenate dehydratase spans 126-303; sequence RVAYQGVPGA…NVTRFLMLAR (178 aa). Residues 319-410 enclose the ACT domain; that stretch reads VFAAQEHKGT…SFLRVLGSYP (92 aa).

Expressed in roots, leaves, stems, flowers and siliques. More abundant in stems and roots.

It is found in the plastid. The protein resides in the chloroplast stroma. The enzyme catalyses L-arogenate + H(+) = L-phenylalanine + CO2 + H2O. The protein operates within amino-acid biosynthesis; L-phenylalanine biosynthesis; L-phenylalanine from L-arogenate: step 1/1. Its function is as follows. Converts the prephenate produced from the shikimate-chorismate pathway into phenylalanine. This Arabidopsis thaliana (Mouse-ear cress) protein is Arogenate dehydratase 4, chloroplastic.